We begin with the raw amino-acid sequence, 2126 residues long: Phthioceranic/hydroxyphthioceranic acid synthase (2126 aa).

The 424-residue stretch at 24–447 (VTPVAVIGMA…GTNVHAVVEQ (424 aa)) folds into the Ketosynthase family 3 (KS3) domain. Residue C196 is the Acyl-thioester intermediate; for beta-ketoacyl synthase activity of the active site. Residues H331 and H367 each act as for beta-ketoacyl synthase activity in the active site. A linker domain (LD) region spans residues 449–549 (PQTEAQPHAA…VYQPAVGQDD (101 aa)). Residues 550 to 849 (RGPVWLFSGQ…VAALAGMRRE (300 aa)) are acyltransferase (AT). S641 (acyl-ester intermediate; for acyltransferase activity) is an active-site residue. Residues 909 to 1191 (STVAVHPLLG…LAVCGLRIGT (283 aa)) are dehydratase (DH). An N-terminal hotdog fold region spans residues 914-1032 (HPLLGAHVRL…RRASAVLQQV (119 aa)). Positions 914-1198 (HPLLGAHVRL…IGTGVSERDK (285 aa)) constitute a PKS/mFAS DH domain. Catalysis depends on H947, which acts as the Proton acceptor; for dehydratase activity. Positions 1051 to 1198 (PCRVDGEDLR…IGTGVSERDK (148 aa)) are C-terminal hotdog fold. D1115 functions as the Proton donor; for dehydratase activity in the catalytic mechanism. Residues 1227 to 1398 (KWLLISDCAA…SEEDETAWRD (172 aa)) form a pseudo beta-ketoacyl reductase (PsiKR) region. An enoylreductase (ER) region spans residues 1426–1750 (SGMRLQIRTP…EHTGKLVLHI (325 aa)). The tract at residues 1772–2019 (GSYIITGGLG…AERSRFFEVF (248 aa)) is beta-ketoacyl reductase (KR). NADP(+)-binding positions include 1780-1783 (LGGL), 1803-1806 (SRTQ), 1831-1832 (DI), and 1904-1905 (FS). Residues 2040 to 2126 (DEWPARLRQL…DAPAAALSSQ (87 aa)) form the Carrier domain. O-(pantetheine 4'-phosphoryl)serine is present on S2075.

The cofactor is pantetheine 4'-phosphate.

It catalyses the reaction hexadecanoyl-[(hydroxy)phthioceranic acid synthase] + 7 (S)-methylmalonyl-CoA + 14 NADPH + 21 H(+) = C37-phthioceranyl-[(hydroxy)phthioceranic acid synthase] + 7 CO2 + 14 NADP(+) + 7 CoA + 7 H2O. The enzyme catalyses hexadecanoyl-[(hydroxy)phthioceranic acid synthase] + 8 (S)-methylmalonyl-CoA + 16 NADPH + 24 H(+) = C40-phthioceranyl-[(hydroxy)phthioceranic acid synthase] + 8 CO2 + 16 NADP(+) + 8 CoA + 8 H2O. Its pathway is lipid metabolism; fatty acid biosynthesis. It functions in the pathway glycolipid metabolism; sulfolipid-1 biosynthesis. Functionally, involved in sulfolipid-1 biosynthesis. Catalyzes the synthesis of the hepta- and octamethyl phthioceranic and hydroxyphthioceranic acids, the methyl-branched acyl constituents of sulfolipids. In Mycobacterium bovis (strain ATCC BAA-935 / AF2122/97), this protein is Phthioceranic/hydroxyphthioceranic acid synthase (pks2).